A 234-amino-acid chain; its full sequence is Coiled-coil domain-containing protein 194 (234 aa).

The N-terminal stretch at 1–43 (MAEPGPEPGRAWRLLALCGAAVFLAAAAAGGALVAWNLAASTA) is a signal peptide. Residues 44–63 (RSPRCPEPEQMNATVRPPDS) are disordered. The stretch at 67–171 (VEELRRRLAE…LQRAGAAEAA (105 aa)) forms a coiled coil. Positions 194 to 234 (GTLRKESRLRPRSGSRTKPSISHRPKSGSTKGCRRPPRDPQ) are disordered. Positions 203 to 219 (RPRSGSRTKPSISHRPK) are enriched in basic residues.

In Mus musculus (Mouse), this protein is Coiled-coil domain-containing protein 194.